A 470-amino-acid polypeptide reads, in one-letter code: Sorting nexin-17 (470 aa).

The region spanning 1–109 (MHFSIPETES…SFLRRAQQET (109 aa)) is the PX domain. Positions 36, 38, 62, and 75 each coordinate a 1,2-diacyl-sn-glycero-3-phospho-(1D-myo-inositol-3-phosphate). The Ras-associating domain occupies 115 to 206 (EEVSLEVLLS…YKIVLRKSYW (92 aa)). The interval 115–432 (EEVSLEVLLS…DASRESMVKL (318 aa)) is FERM-like. The interval 270–432 (GYLRFDACVA…DASRESMVKL (163 aa)) is PTB-like F3 module. Residues S336, S407, S409, S415, S421, S437, and S440 each carry the phosphoserine modification. Residues 400–426 (VGGTLRRSDSQQAVKSPPLLESPDASR) form a disordered region.

It belongs to the sorting nexin family. Monomer. Interacts with APP (via cytoplasmic YXNPXY motif). Interacts with KIF1B. Interacts with the C-termini of P-selectin, PTC, LDLR, VLDLR, LRP1 and LRP8. Interacts with KRIT1 (via N-terminus). Interacts with HRAS. Interacts with ITGB1 and ITGB5 (via NPxY motif). Interacts with CCDC22 and CCDC93; the interaction associates SNX17 with the CCC complex. Interacts (via C-terminus) with VPS26C and VPS35L; the interactions are direct and associate SNX17 with the retriever complex.

The protein resides in the cytoplasm. Its subcellular location is the early endosome. It is found in the cytoplasmic vesicle membrane. Its function is as follows. Critical regulator of endosomal recycling of numerous surface proteins, including integrins, signaling receptor and channels. Binds to NPxY sequences in the cytoplasmic tails of target cargos. Associates with retriever and CCC complexes to prevent lysosomal degradation and promote cell surface recycling of numerous cargos such as integrins ITGB1, ITGB5 and their associated alpha subunits. Also required for maintenance of normal cell surface levels of APP and LRP1. Interacts with membranes containing phosphatidylinositol 3-phosphate (PtdIns(3P)). This Bos taurus (Bovine) protein is Sorting nexin-17 (SNX17).